Consider the following 458-residue polypeptide: BUD13 homolog (458 aa).

Disordered stretches follow at residues 16-37 (SGDIEKKKKKKNKDKNKPSGLR), 81-328 (KQTF…TEEL), and 437-458 (AKTENTKTANQSEYYKSIAEYE). Positions 138–148 (NRHDSDKDNSP) are enriched in basic and acidic residues. Composition is skewed to basic residues over residues 175-185 (RNRRSPPRTRR) and 208-218 (PRRRPSSPARR). Composition is skewed to basic and acidic residues over residues 219–243 (RKDDDLSPPRKSRKIEEPKKIKKEE), 266–284 (RDLKEESDKLRAKNSKMFE), and 314–328 (DQAKKERETKKTEEL). Positions 262–356 (LQSARDLKEE…AQLEEMARVA (95 aa)) form a coiled coil.

The protein belongs to the CWC26 family.

This is BUD13 homolog from Caenorhabditis elegans.